The chain runs to 199 residues: N-(5'-phosphoribosyl)anthranilate isomerase (199 aa).

The protein belongs to the TrpF family.

It catalyses the reaction N-(5-phospho-beta-D-ribosyl)anthranilate = 1-(2-carboxyphenylamino)-1-deoxy-D-ribulose 5-phosphate. It participates in amino-acid biosynthesis; L-tryptophan biosynthesis; L-tryptophan from chorismate: step 3/5. In Streptococcus pneumoniae (strain Hungary19A-6), this protein is N-(5'-phosphoribosyl)anthranilate isomerase.